Here is a 262-residue protein sequence, read N- to C-terminus: Hydroxyethylthiazole kinase (262 aa).

Methionine 50 serves as a coordination point for substrate. Residues arginine 125 and threonine 171 each coordinate ATP. Substrate is bound at residue glycine 198.

The protein belongs to the Thz kinase family. It depends on Mg(2+) as a cofactor.

It catalyses the reaction 5-(2-hydroxyethyl)-4-methylthiazole + ATP = 4-methyl-5-(2-phosphooxyethyl)-thiazole + ADP + H(+). It participates in cofactor biosynthesis; thiamine diphosphate biosynthesis; 4-methyl-5-(2-phosphoethyl)-thiazole from 5-(2-hydroxyethyl)-4-methylthiazole: step 1/1. Its function is as follows. Catalyzes the phosphorylation of the hydroxyl group of 4-methyl-5-beta-hydroxyethylthiazole (THZ). In Shigella sonnei (strain Ss046), this protein is Hydroxyethylthiazole kinase.